A 201-amino-acid chain; its full sequence is Troponin I (201 aa).

Alanine 1 carries the N-acetylalanine modification. A compositionally biased stretch (basic and acidic residues) spans 1 to 33 (ADKAKAAEEAKKKQDDIDRKKAEVRKRLEEQSL). Residues 1 to 45 (ADKAKAAEEAKKKQDDIDRKKAEVRKRLEEQSLKKQKKGFMTPER) are disordered. Residues 108 to 117 (IESDKYDVEL) are troponin T-interaction. The actin-binding stretch occupies residues 135–148 (DLRGKFIKPTLKKV). An N6,N6,N6-trimethyllysine mark is found at lysine 142 and lysine 146. The tract at residues 182-201 (EDDKGATEGDGPAAEEVAAE) is disordered.

This sequence belongs to the troponin I family.

In terms of biological role, troponin I is the actomyosin ATPase inhibitory subunit present in the thin filament regulatory complex. This is Troponin I from Astacus leptodactylus (Turkish narrow-clawed crayfish).